A 500-amino-acid chain; its full sequence is Neuronal pentraxin receptor (500 aa).

At 1 to 2 (MK) the chain is on the cytoplasmic side. The helical; Signal-anchor for type II membrane protein transmembrane segment at 3-23 (FLAVLLAAGMLAFLGAVICII) threads the bilayer. Residues 24–500 (ASVPLAASPA…FDVCKGRAKA (477 aa)) lie on the Extracellular side of the membrane. N42 carries an N-linked (GlcNAc...) asparagine glycan. The span at 42 to 63 (NASVASGAAASPGPQRSLSALH) shows a compositional bias: low complexity. 2 disordered regions span residues 42–81 (NASV…PAAS) and 162–183 (ESGL…ADGP). An N-linked (GlcNAc...) asparagine glycan is attached at N216. The region spanning 292 to 494 (DAFKISIPIR…GATKAAFDVC (203 aa)) is the Pentraxin (PTX) domain. The cysteines at positions 322 and 383 are disulfide-linked. Residues N347, E425, Q426, D427, and Q437 each coordinate Ca(2+). N-linked (GlcNAc...) asparagine glycosylation occurs at N463.

As to quaternary structure, heteropentamer with NPTX1 and/or NPTX2. Also binds taipoxin-associated calcium-binding protein 49 (TCBP49/RCN2). Interacts with KLHL2. The cofactor is Ca(2+). Ubiquitinated by a cullin-RING-based BCR (BTB-CUL3-RBX1) E3 ubiquitin-protein ligase complex containing KLHL2.

Its subcellular location is the membrane. In terms of biological role, may be involved in mediating uptake of synaptic material during synapse remodeling or in mediating the synaptic clustering of AMPA glutamate receptors at a subset of excitatory synapses. This is Neuronal pentraxin receptor (NPTXR) from Homo sapiens (Human).